The following is a 145-amino-acid chain: Photosystem I reaction center subunit XI (145 aa).

Helical transmembrane passes span 48-68, 75-95, and 125-145; these read LEIGMAHGYFLIGPFYILGPL, LLVGLFSAFGLIIILTLALTI, and IGALGGASVAYLVLNNISFFA.

Belongs to the PsaL family.

The protein localises to the plastid. It localises to the chloroplast thylakoid membrane. This chain is Photosystem I reaction center subunit XI, found in Isochrysis galbana (Marine planktonic alga).